The following is a 329-amino-acid chain: Gibberellin 2-beta-dioxygenase 1 (329 aa).

The Fe2OG dioxygenase domain occupies 165–273; it reads NTDSILRLNH…RVSMIYFAGP (109 aa). Fe cation is bound by residues His197, Asp199, and His254. Arg264 is a catalytic residue. Arg264 is a 2-oxoglutarate binding site.

Belongs to the iron/ascorbate-dependent oxidoreductase family. GA2OX subfamily. Fe(2+) serves as cofactor. Preferentially expressed in flowers, siliques, and upper stems. Not expressed in the apex.

The catalysed reaction is gibberellin A1 + 2-oxoglutarate + O2 = gibberellin A8 + succinate + CO2. Its pathway is plant hormone biosynthesis; gibberellin biosynthesis. Catalyzes the 2-beta-hydroxylation of several biologically active gibberellins, leading to the homeostatic regulation of their endogenous level. Catabolism of gibberellins (GAs) plays a central role in plant development. Converts GA9/GA20 to GA51/GA29 and GA4/GA1 to GA34/GA8. This is Gibberellin 2-beta-dioxygenase 1 (GA2OX1) from Arabidopsis thaliana (Mouse-ear cress).